The sequence spans 327 residues: MYQSLMTVRETQIAIKEVKTFFEDQLAKRLELFRVSAPLFVTKKSGLNDHLNGVERPIEFDMLHSGEELEIVHSLAKWKRFALHEYGYEAGEGLYTNMNAIRRDEELDATHSIYVDQWDWEKIVQKEWRTVEYLQKTVQTIYGIFKDLEDHLFEKYPFLGKYLPEEIVFVTSQELEDKYPELTPKDREHAIAKEHGAVFIIGIGDALRSGEKHDGRAADYDDWKLNGDILFWHPVLQSSFELSSMGIRVDSKSLDEQLTKTGEDFKREYDFHKGILEDVLPLTIGGGIGQSRMCMYFLRKAHIGEVQSSVWPDDLREACKKENIHLF.

This sequence belongs to the class-II aminoacyl-tRNA synthetase family. AsnA subfamily.

The protein localises to the cytoplasm. The catalysed reaction is L-aspartate + NH4(+) + ATP = L-asparagine + AMP + diphosphate + H(+). It functions in the pathway amino-acid biosynthesis; L-asparagine biosynthesis; L-asparagine from L-aspartate (ammonia route): step 1/1. In Bacillus cereus (strain B4264), this protein is Aspartate--ammonia ligase.